The sequence spans 584 residues: Aspartate--tRNA(Asp/Asn) ligase (584 aa).

Residue E173 participates in L-aspartate binding. Residues 197–200 (QLFK) are aspartate. R219 provides a ligand contact to L-aspartate. ATP is bound by residues 219–221 (RDE) and Q228. L-aspartate is bound at residue H446. An ATP-binding site is contributed by E476. An L-aspartate-binding site is contributed by R483. 528–531 (GLDR) provides a ligand contact to ATP.

The protein belongs to the class-II aminoacyl-tRNA synthetase family. Type 1 subfamily. As to quaternary structure, homodimer.

It localises to the cytoplasm. It catalyses the reaction tRNA(Asx) + L-aspartate + ATP = L-aspartyl-tRNA(Asx) + AMP + diphosphate. Functionally, aspartyl-tRNA synthetase with relaxed tRNA specificity since it is able to aspartylate not only its cognate tRNA(Asp) but also tRNA(Asn). Reaction proceeds in two steps: L-aspartate is first activated by ATP to form Asp-AMP and then transferred to the acceptor end of tRNA(Asp/Asn). In Sulfurovum sp. (strain NBC37-1), this protein is Aspartate--tRNA(Asp/Asn) ligase.